Reading from the N-terminus, the 247-residue chain is LHFPL tetraspan subfamily member 4 protein (247 aa).

A run of 4 helical transmembrane segments spans residues Ile-22–Ile-42, Phe-97–Phe-117, Ile-127–Pro-147, and Ile-178–Gly-198.

Belongs to the LHFP family. Interacts with GABA(A) receptor subunits. Interacts with GABRB3. Interacts with GABRA2. Interacts with GABRG2. Identified in a complex of 720 kDa composed of LHFPL4, NLGN2, GABRA1, GABRB2, GABRG2 and GABRB3. Interacts with GABRA1. Interacts with NLGN2; leading to mutual regulation of protein level and synaptic clustering.

It localises to the cell projection. The protein resides in the dendrite. The protein localises to the postsynaptic cell membrane. Plays a role in the regulation of inhibitory synapse formation and function by being involved in maintening gamma-aminobutyric acid receptors (GABAARs) clustering and their associated scaffold proteins at inhibitory synaptic sites. Acts in concert with NLGN2 to recruit or stabilize GABAARs. The chain is LHFPL tetraspan subfamily member 4 protein from Bos taurus (Bovine).